The following is a 284-amino-acid chain: 4-hydroxybenzoate octaprenyltransferase (284 aa).

Helical transmembrane passes span 19-39 (IPIL…SHGL), 42-62 (ISYL…GCII), 85-105 (GQLS…VAFI), 107-127 (VLFL…LAIL), 134-154 (FFAI…FMAF), 165-185 (AWIF…IYAL), 211-231 (ILLF…YCDF), 233-253 (SFFY…YFLY), and 261-281 (CINA…IAVI).

The protein belongs to the UbiA prenyltransferase family. Requires Mg(2+) as cofactor.

The protein resides in the cell inner membrane. It catalyses the reaction all-trans-octaprenyl diphosphate + 4-hydroxybenzoate = 4-hydroxy-3-(all-trans-octaprenyl)benzoate + diphosphate. It functions in the pathway cofactor biosynthesis; ubiquinone biosynthesis. Catalyzes the prenylation of para-hydroxybenzoate (PHB) with an all-trans polyprenyl group. Mediates the second step in the final reaction sequence of ubiquinone-8 (UQ-8) biosynthesis, which is the condensation of the polyisoprenoid side chain with PHB, generating the first membrane-bound Q intermediate 3-octaprenyl-4-hydroxybenzoate. The protein is 4-hydroxybenzoate octaprenyltransferase of Francisella tularensis subsp. tularensis (strain FSC 198).